The chain runs to 61 residues: Metallothionein-2 (61 aa).

Position 1 is an N-acetylmethionine (Met1). The beta stretch occupies residues 1-29 (MDPNCSCAAGDSCTCAGSCKCKECKCTSC). A divalent metal cation is bound by residues Cys5, Cys7, Cys13, Cys15, Cys19, Cys21, Cys24, Cys26, Cys29, Cys33, Cys34, Cys36, Cys37, Cys41, Cys44, Cys48, Cys50, and Cys57. An alpha region spans residues 30–61 (KKSCCSCCPVGCAKCAQGCICKGASDKCSCCA). Ser58 is modified (phosphoserine). Residues Cys59 and Cys60 each contribute to the a divalent metal cation site.

Belongs to the metallothionein superfamily. Type 1 family. As to quaternary structure, interacts with EOLA1.

Functionally, metallothioneins have a high content of cysteine residues that bind various heavy metals; these proteins are transcriptionally regulated by both heavy metals and glucocorticoids. This chain is Metallothionein-2, found in Homo sapiens (Human).